The chain runs to 307 residues: 2-haloacid dehalogenase, configuration-inverting (307 aa).

This sequence belongs to the HAD-like hydrolase superfamily. S-2-haloalkanoic acid dehalogenase family. As to quaternary structure, homodimer.

It catalyses the reaction an (S)-2-haloacid + H2O = a (2R)-2-hydroxycarboxylate + a halide anion + H(+). The catalysed reaction is an (R)-2-haloacid + H2O = a (2S)-2-hydroxycarboxylate + a halide anion + H(+). Dehalogenates both (S)- and (R)-2-haloalkanoic acids to the corresponding (R)- and (S)-hydroxyalkanoic acids, respectively, with inversion of configuration at C-2. Acts on 2-haloalkanoic acids whose carbon chain lengths are five or less. The chain is 2-haloacid dehalogenase, configuration-inverting from Pseudomonas sp. (strain 113).